The sequence spans 688 residues: Methionine--tRNA ligase (688 aa).

A 'HIGH' region motif is present at residues 13–23; it reads PYANGNFHIGH. The Zn(2+) site is built by Cys-144, Cys-147, Cys-157, and Cys-160. Residues 342-346 carry the 'KMSKS' region motif; sequence KMSKS. Lys-345 contributes to the ATP binding site. The region spanning 582 to 688 is the tRNA-binding domain; that stretch reads DFAKVDLRIA…PGAQPGMRIH (107 aa).

It belongs to the class-I aminoacyl-tRNA synthetase family. MetG type 1 subfamily. In terms of assembly, homodimer. It depends on Zn(2+) as a cofactor.

It localises to the cytoplasm. It catalyses the reaction tRNA(Met) + L-methionine + ATP = L-methionyl-tRNA(Met) + AMP + diphosphate. Its function is as follows. Is required not only for elongation of protein synthesis but also for the initiation of all mRNA translation through initiator tRNA(fMet) aminoacylation. This Acidovorax sp. (strain JS42) protein is Methionine--tRNA ligase.